A 1184-amino-acid chain; its full sequence is Fibulin-2 (1184 aa).

An N-terminal signal peptide occupies residues 1–27 (MVLLWEPAGAWLALGLALALGPSVAAA). The tract at residues 28-177 (APRQDCTGVE…ELICYQLPGC (150 aa)) is subdomain NA (Cys-rich). A n region spans residues 28 to 444 (APRQDCTGVE…EGSTKDLIET (417 aa)). The segment at 178 to 444 (HGNFSDAEEG…EGSTKDLIET (267 aa)) is subdomain NB (Cys-free). N180 carries N-linked (GlcNAc...) asparagine glycosylation. Disordered stretches follow at residues 221-293 (VQAG…MAVT) and 399-437 (IPPTREVPRKPQVLPHSHVEEDTDPNSVHSIPRSSPEGS). The span at 224-236 (GAGGPPAALGGGS) shows a compositional bias: gly residues. A compositionally biased stretch (low complexity) spans 252–261 (PRPTAAAALG). Over residues 276–288 (DSEEEEEEEEERE) the composition is skewed to acidic residues. S277 is subject to Phosphoserine. A compositionally biased stretch (polar residues) spans 423–436 (PNSVHSIPRSSPEG). Intrachain disulfides connect C445-C472, C446-C479, C459-C480, C489-C518, C502-C519, C521-C545, C522-C552, C535-C553, C608-C620, C616-C629, C631-C644, C683-C693, C689-C702, C704-C717, C723-C736, C730-C745, C751-C762, C768-C781, C775-C790, C796-C808, C814-C827, C821-C836, C843-C856, C862-C875, C869-C884, C886-C899, C905-C917, C913-C926, C928-C941, C947-C956, C952-C965, C967-C980, C986-C998, C994-C1007, C1009-C1023, C1029-C1042, C1036-C1051, and C1056-C1068. Anaphylatoxin-like domains lie at 445 to 480 (CCAAGQQWAIDNDECLEIPESGTEDNVCRTAQRHCC), 488 to 519 (SCMAGVLGAKEGETCGAEDNDSCGISLYKQCC), and 521 to 553 (CCGLGLRVRAEGQSCESNPNLGYPCNHVMLSCC). N507 carries an N-linked (GlcNAc...) asparagine glycan. One can recognise an EGF-like 1; calcium-binding domain in the interval 604–645 (DQDECLLLPGELCQHLCINTVGSYHCACFPGFSLQDDGRTCR). One can recognise an EGF-like 2 domain in the interval 679–718 (QPNTCKDNGPCKQVCSTVGGSAICSCFPGYAIMADGVSCE). The EGF-like 3; calcium-binding domain occupies 719–763 (DINECVTDLHTCSRGEHCVNTLGSFHCYKALTCEPGYALKDGECE). The EGF-like 4; calcium-binding domain maps to 764–809 (DVDECAMGTHTCQPGFLCQNTKGSFYCQARQRCMDGFLQDPEGNCV). One can recognise an EGF-like 5; calcium-binding domain in the interval 810 to 857 (DINECTSLSEPCRPGFSCINTVGSYTCQRNPLICARGYHASDDGTKCV). Positions 858–900 (DVNECETGVHRCGEGQVCHNLPGSYRCDCKAGFQRDAFGRGCI) constitute an EGF-like 6; calcium-binding domain. Residues 901–942 (DVNECWASPGRLCQHTCENTLGSYRCSCASGFLLAADGKRCE) enclose the EGF-like 7; calcium-binding domain. Residues 943 to 981 (DVNECEAQRCSQECANIYGSYQCYCRQGYQLAEDGHTCT) enclose the EGF-like 8; calcium-binding domain. The EGF-like 9; calcium-binding domain occupies 982–1024 (DIDECAQGAGILCTFRCLNVPGSYQCACPEQGYTMTANGRSCK). One can recognise an EGF-like 10; calcium-binding domain in the interval 1025 to 1069 (DVDECALGTHNCSEAETCHNIQGSFRCLRFECPPNYVQVSKTKCE). N-linked (GlcNAc...) asparagine glycosylation occurs at N1035. The tract at residues 1070–1184 (RTTCHDFLEC…MHIFFTTFAL (115 aa)) is domain III.

The protein belongs to the fibulin family. In terms of assembly, homotrimer; disulfide-linked. Interacts with LAMA2. Interacts with FBN1 (via N-terminal domain). Forms a ternary complex with ELN and FBN1. In terms of processing, O-glycosylated with core 1 or possibly core 8 glycans. It is unsure if the O-glycosylation is on Thr-347 or Ser-348. Component of both basement membranes and other connective tissues. Expressed in heart, placenta and ovary.

The protein localises to the secreted. It is found in the extracellular space. It localises to the extracellular matrix. Its function is as follows. Its binding to fibronectin and some other ligands is calcium dependent. May act as an adapter that mediates the interaction between FBN1 and ELN. In Homo sapiens (Human), this protein is Fibulin-2 (FBLN2).